The following is a 178-amino-acid chain: Adenine phosphoribosyltransferase (178 aa).

The protein belongs to the purine/pyrimidine phosphoribosyltransferase family. As to quaternary structure, homodimer.

The protein localises to the cytoplasm. It carries out the reaction AMP + diphosphate = 5-phospho-alpha-D-ribose 1-diphosphate + adenine. It functions in the pathway purine metabolism; AMP biosynthesis via salvage pathway; AMP from adenine: step 1/1. In terms of biological role, catalyzes a salvage reaction resulting in the formation of AMP, that is energically less costly than de novo synthesis. The chain is Adenine phosphoribosyltransferase from Helicobacter hepaticus (strain ATCC 51449 / 3B1).